Here is a 549-residue protein sequence, read N- to C-terminus: Chaperonin GroEL (549 aa).

ATP contacts are provided by residues 29–32 (TLGP), K50, 86–90 (DGTTT), G414, 477–479 (NAL), and D493.

This sequence belongs to the chaperonin (HSP60) family. As to quaternary structure, forms a cylinder of 14 subunits composed of two heptameric rings stacked back-to-back. Interacts with the co-chaperonin GroES.

The protein resides in the cytoplasm. The catalysed reaction is ATP + H2O + a folded polypeptide = ADP + phosphate + an unfolded polypeptide.. In terms of biological role, together with its co-chaperonin GroES, plays an essential role in assisting protein folding. The GroEL-GroES system forms a nano-cage that allows encapsulation of the non-native substrate proteins and provides a physical environment optimized to promote and accelerate protein folding. This is Chaperonin GroEL from Leptospira biflexa serovar Patoc (strain Patoc 1 / Ames).